The primary structure comprises 376 residues: Probable plastid-lipid-associated protein 3, chloroplastic (376 aa).

Residues 1–53 (MATLFTVARPSSLLYVSSINPSKTFSPSISLKLNSLSFSFGYRPKPLRFSKIR) constitute a chloroplast transit peptide. The segment at 54–146 (SSLPSESESE…EADAGNGSAV (93 aa)) is disordered. Over residues 85–96 (PDSQPDNVTVNV) the composition is skewed to polar residues. Basic and acidic residues predominate over residues 117–126 (MESDPPRNED).

The protein belongs to the PAP/fibrillin family.

It localises to the plastid. It is found in the chloroplast. The protein localises to the plastoglobule. Functionally, probably involved in light/cold stress-related jasmonate (JA) biosynthesis. The polypeptide is Probable plastid-lipid-associated protein 3, chloroplastic (PAP3) (Arabidopsis thaliana (Mouse-ear cress)).